The sequence spans 101 residues: Urease subunit beta (101 aa).

This sequence belongs to the urease beta subunit family. Heterotrimer of UreA (gamma), UreB (beta) and UreC (alpha) subunits. Three heterotrimers associate to form the active enzyme.

It localises to the cytoplasm. The catalysed reaction is urea + 2 H2O + H(+) = hydrogencarbonate + 2 NH4(+). It participates in nitrogen metabolism; urea degradation; CO(2) and NH(3) from urea (urease route): step 1/1. This chain is Urease subunit beta, found in Cupriavidus metallidurans (strain ATCC 43123 / DSM 2839 / NBRC 102507 / CH34) (Ralstonia metallidurans).